The primary structure comprises 786 residues: Endonuclease MutS2 (786 aa).

Residue 332–339 (GPNTGGKT) coordinates ATP. The Smr domain maps to 711–786 (IDLRGMDSME…GTGVTVVELK (76 aa)).

It belongs to the DNA mismatch repair MutS family. MutS2 subfamily. Homodimer. Binds to stalled ribosomes, contacting rRNA.

Functionally, endonuclease that is involved in the suppression of homologous recombination and thus may have a key role in the control of bacterial genetic diversity. Acts as a ribosome collision sensor, splitting the ribosome into its 2 subunits. Detects stalled/collided 70S ribosomes which it binds and splits by an ATP-hydrolysis driven conformational change. Acts upstream of the ribosome quality control system (RQC), a ribosome-associated complex that mediates the extraction of incompletely synthesized nascent chains from stalled ribosomes and their subsequent degradation. Probably generates substrates for RQC. This is Endonuclease MutS2 from Clostridium tetani (strain Massachusetts / E88).